The following is a 318-amino-acid chain: Porphobilinogen deaminase (318 aa).

Cys241 carries the S-(dipyrrolylmethanemethyl)cysteine modification.

The protein belongs to the HMBS family. As to quaternary structure, monomer. Dipyrromethane is required as a cofactor.

It catalyses the reaction 4 porphobilinogen + H2O = hydroxymethylbilane + 4 NH4(+). The protein operates within porphyrin-containing compound metabolism; protoporphyrin-IX biosynthesis; coproporphyrinogen-III from 5-aminolevulinate: step 2/4. Tetrapolymerization of the monopyrrole PBG into the hydroxymethylbilane pre-uroporphyrinogen in several discrete steps. The protein is Porphobilinogen deaminase of Geobacter sulfurreducens (strain ATCC 51573 / DSM 12127 / PCA).